A 231-amino-acid chain; its full sequence is Elongation factor 1-delta 1 (231 aa).

The residue at position 2 (alanine 2) is an N-acetylalanine. One can recognise a GST C-terminal domain in the interval 10-73; sequence DAGLKKLDEH…LRISGVSAEG (64 aa). 2 disordered regions span residues 85 to 108 and 116 to 135; these read TEEA…EDDD and ETEE…KAST. The segment covering 119–129 has biased composition (basic and acidic residues); the sequence is EEKKAAEERAA.

This sequence belongs to the EF-1-beta/EF-1-delta family. In terms of assembly, EF-1 is composed of 4 subunits: alpha, beta (1B-alpha=beta'), delta (1B-beta), and gamma (1B-gamma).

Functionally, EF-1-beta and EF-1-delta stimulate the exchange of GDP bound to EF-1-alpha to GTP. This chain is Elongation factor 1-delta 1, found in Arabidopsis thaliana (Mouse-ear cress).